A 261-amino-acid chain; its full sequence is Cytochrome c oxidase subunit 3 (261 aa).

Residues Met1 to Pro15 lie on the Mitochondrial matrix side of the membrane. Residues Trp16 to Trp34 form a helical membrane-spanning segment. Topologically, residues Phe35–Thr40 are mitochondrial intermembrane. The helical transmembrane segment at Thr41–Thr66 threads the bilayer. At Phe67–Thr72 the chain is on the mitochondrial matrix side. The helical transmembrane segment at Pro73–Ser105 threads the bilayer. The Mitochondrial intermembrane segment spans residues Leu106–Glu128. Residues Val129 to Met152 form a helical membrane-spanning segment. Residues Glu153–Asn155 lie on the Mitochondrial matrix side of the membrane. The chain crosses the membrane as a helical span at residues Arg156–Glu183. Over Ala184–Asp190 the chain is Mitochondrial intermembrane. Residues Gly191–Leu223 traverse the membrane as a helical segment. Over Lys224–His232 the chain is Mitochondrial matrix. Residues Phe233–Ile256 form a helical membrane-spanning segment. The Mitochondrial intermembrane segment spans residues Tyr257 to Ser261.

It belongs to the cytochrome c oxidase subunit 3 family. Component of the cytochrome c oxidase (complex IV, CIV), a multisubunit enzyme composed of 14 subunits. The complex is composed of a catalytic core of 3 subunits MT-CO1, MT-CO2 and MT-CO3, encoded in the mitochondrial DNA, and 11 supernumerary subunits COX4I, COX5A, COX5B, COX6A, COX6B, COX6C, COX7A, COX7B, COX7C, COX8 and NDUFA4, which are encoded in the nuclear genome. The complex exists as a monomer or a dimer and forms supercomplexes (SCs) in the inner mitochondrial membrane with NADH-ubiquinone oxidoreductase (complex I, CI) and ubiquinol-cytochrome c oxidoreductase (cytochrome b-c1 complex, complex III, CIII), resulting in different assemblies (supercomplex SCI(1)III(2)IV(1) and megacomplex MCI(2)III(2)IV(2)).

It is found in the mitochondrion inner membrane. It carries out the reaction 4 Fe(II)-[cytochrome c] + O2 + 8 H(+)(in) = 4 Fe(III)-[cytochrome c] + 2 H2O + 4 H(+)(out). Functionally, component of the cytochrome c oxidase, the last enzyme in the mitochondrial electron transport chain which drives oxidative phosphorylation. The respiratory chain contains 3 multisubunit complexes succinate dehydrogenase (complex II, CII), ubiquinol-cytochrome c oxidoreductase (cytochrome b-c1 complex, complex III, CIII) and cytochrome c oxidase (complex IV, CIV), that cooperate to transfer electrons derived from NADH and succinate to molecular oxygen, creating an electrochemical gradient over the inner membrane that drives transmembrane transport and the ATP synthase. Cytochrome c oxidase is the component of the respiratory chain that catalyzes the reduction of oxygen to water. Electrons originating from reduced cytochrome c in the intermembrane space (IMS) are transferred via the dinuclear copper A center (CU(A)) of subunit 2 and heme A of subunit 1 to the active site in subunit 1, a binuclear center (BNC) formed by heme A3 and copper B (CU(B)). The BNC reduces molecular oxygen to 2 water molecules using 4 electrons from cytochrome c in the IMS and 4 protons from the mitochondrial matrix. In Gazella spekei (Speke's gazelle), this protein is Cytochrome c oxidase subunit 3 (MT-CO3).